The following is a 356-amino-acid chain: Peptide methionine sulfoxide reductase MsrA/MsrB (356 aa).

A peptide methionine sulfoxide reductase A region spans residues 46–199; sequence HEIYLAGGCF…PNGYCHIDLE (154 aa). Cys-54 is an active-site residue. A MsrB domain is found at 216 to 339; that stretch reads DAELKAKLTP…NSAAVKFIPL (124 aa). Cys-328 (nucleophile) is an active-site residue.

This sequence in the N-terminal section; belongs to the MsrA Met sulfoxide reductase family. In the C-terminal section; belongs to the MsrB Met sulfoxide reductase family.

The catalysed reaction is L-methionyl-[protein] + [thioredoxin]-disulfide + H2O = L-methionyl-(S)-S-oxide-[protein] + [thioredoxin]-dithiol. The enzyme catalyses [thioredoxin]-disulfide + L-methionine + H2O = L-methionine (S)-S-oxide + [thioredoxin]-dithiol. It carries out the reaction L-methionyl-[protein] + [thioredoxin]-disulfide + H2O = L-methionyl-(R)-S-oxide-[protein] + [thioredoxin]-dithiol. In terms of biological role, has an important function as a repair enzyme for proteins that have been inactivated by oxidation. Catalyzes the reversible oxidation-reduction of methionine sulfoxide in proteins to methionine. The protein is Peptide methionine sulfoxide reductase MsrA/MsrB (msrAB) of Aggregatibacter actinomycetemcomitans (Actinobacillus actinomycetemcomitans).